The chain runs to 346 residues: tRNA N6-adenosine threonylcarbamoyltransferase (346 aa).

Residues histidine 111 and histidine 115 each contribute to the Fe cation site. Substrate-binding positions include 134–138 (LVSGG), aspartate 167, glycine 180, aspartate 184, and asparagine 279. Aspartate 307 contacts Fe cation.

It belongs to the KAE1 / TsaD family. The cofactor is Fe(2+).

It localises to the cytoplasm. The catalysed reaction is L-threonylcarbamoyladenylate + adenosine(37) in tRNA = N(6)-L-threonylcarbamoyladenosine(37) in tRNA + AMP + H(+). In terms of biological role, required for the formation of a threonylcarbamoyl group on adenosine at position 37 (t(6)A37) in tRNAs that read codons beginning with adenine. Is involved in the transfer of the threonylcarbamoyl moiety of threonylcarbamoyl-AMP (TC-AMP) to the N6 group of A37, together with TsaE and TsaB. TsaD likely plays a direct catalytic role in this reaction. The polypeptide is tRNA N6-adenosine threonylcarbamoyltransferase (Gloeothece citriformis (strain PCC 7424) (Cyanothece sp. (strain PCC 7424))).